The chain runs to 186 residues: Adenine phosphoribosyltransferase (186 aa).

132-136 is a binding site for AMP; sequence ATGGS.

It belongs to the purine/pyrimidine phosphoribosyltransferase family. As to quaternary structure, homodimer. Requires Mg(2+) as cofactor.

It is found in the cytoplasm. It localises to the nucleus. The catalysed reaction is AMP + diphosphate = 5-phospho-alpha-D-ribose 1-diphosphate + adenine. It functions in the pathway purine metabolism; AMP biosynthesis via salvage pathway; AMP from adenine: step 1/1. In terms of biological role, catalyzes a salvage reaction resulting in the formation of AMP, that is energically less costly than de novo synthesis. The chain is Adenine phosphoribosyltransferase (APT1) from Debaryomyces hansenii (strain ATCC 36239 / CBS 767 / BCRC 21394 / JCM 1990 / NBRC 0083 / IGC 2968) (Yeast).